The sequence spans 148 residues: uncharacterized protein (148 aa).

Residues 122 to 148 (HNWRKRMGTRRGRHEQSPTSRPRKGPD) are disordered. Positions 123–134 (NWRKRMGTRRGR) are enriched in basic residues.

This is an uncharacterized protein from Homo sapiens (Human).